We begin with the raw amino-acid sequence, 405 residues long: Probable tRNA sulfurtransferase (405 aa).

A THUMP domain is found at 60–165; it reads DAVINRLKKV…SNGIFLTSEV (106 aa). ATP contacts are provided by residues 183-184, 208-209, arginine 265, glycine 287, and glutamine 296; these read ML and HF.

This sequence belongs to the ThiI family.

It localises to the cytoplasm. The catalysed reaction is [ThiI sulfur-carrier protein]-S-sulfanyl-L-cysteine + a uridine in tRNA + 2 reduced [2Fe-2S]-[ferredoxin] + ATP + H(+) = [ThiI sulfur-carrier protein]-L-cysteine + a 4-thiouridine in tRNA + 2 oxidized [2Fe-2S]-[ferredoxin] + AMP + diphosphate. It carries out the reaction [ThiS sulfur-carrier protein]-C-terminal Gly-Gly-AMP + S-sulfanyl-L-cysteinyl-[cysteine desulfurase] + AH2 = [ThiS sulfur-carrier protein]-C-terminal-Gly-aminoethanethioate + L-cysteinyl-[cysteine desulfurase] + A + AMP + 2 H(+). It participates in cofactor biosynthesis; thiamine diphosphate biosynthesis. Its function is as follows. Catalyzes the ATP-dependent transfer of a sulfur to tRNA to produce 4-thiouridine in position 8 of tRNAs, which functions as a near-UV photosensor. Also catalyzes the transfer of sulfur to the sulfur carrier protein ThiS, forming ThiS-thiocarboxylate. This is a step in the synthesis of thiazole, in the thiamine biosynthesis pathway. The sulfur is donated as persulfide by IscS. The sequence is that of Probable tRNA sulfurtransferase from Pediococcus pentosaceus (strain ATCC 25745 / CCUG 21536 / LMG 10740 / 183-1w).